Consider the following 215-residue polypeptide: Glutathione S-transferase stcT (215 aa).

Positions 2–82 (PFGTLYTRPF…YDSNTTLLGT (81 aa)) constitute a GST N-terminal domain. The glutathione site is built by Lys-52 and Glu-66. Residue Lys-52 coordinates substrate. Residues 83–211 (TGQEYASIIR…PVLAEYEMPI (129 aa)) enclose the GST C-terminal domain.

It belongs to the GST superfamily. Requires glutathione as cofactor.

The protein operates within mycotoxin biosynthesis; sterigmatocystin biosynthesis. Functionally, glutathione S-transferase; part of the gene cluster that mediates the biosynthesis of sterigmatocystin (ST), a polyketide-derived furanocoumarin which is part of the most toxic and carcinogenic compounds among the known mycotoxins. The first step in the biosynthesis of sterigmatocystin is the production of hexanoate by the fatty acid synthase (FAS) units stcJ and stcK. The polyketide backbone is assembled by the non-reducing polyketide synthase stcA by condensation of the starter hexanoyl-CoA and 7 malonyl-CoA extender units followed by cyclization and release of norsolorinic acid. Norsolorinic acid is the first stable intermediate in the biosynthesis of sterigmatocystin and is converted into averantin (AVN) by the ketoreductase stcE which reduces the hexanoate ketone to an alcohol. Averantin is then oxidized into 5'-hydroxyaverantin (HAVN) by the cytochrome P450 monooxygenase stcF. 5'-hydroxyaverantin is further converted to 5'-oxyaverantin (OAVN) by the 5'-hydroxyaverantin dehydrogenase stcG. The next step is the conversion of OAVN into averufin (AVF) which is catalyzed by a yet to be identified enzyme. The cytochrome P450 monooxygenase stcB and the flavin-binding monooxygenase stcW are both required for the conversion of averufin to 1-hydroxyversicolorone. The esterase stcI probably catalyzes the formation of versiconal hemiacetal acetate from 1-hydroxyversicolorone. The oxydoreductase stcN then probably catalyzes the biosynthetic step from versiconal to versicolorin B (VERB). The next step is performed by the versicolorin B desaturase stcL to produce versicolorin A (VERA). The ketoreductase stcU and the cytochrome P450 monooxygenase stcS are involved in the conversion of versicolorin A to demethylsterigmatocystin. The Baeyer-Villiger oxidas stcQ and the reductase stcR might be involved in the biosynthetic step from versicolorin A to demethylsterigmatocystin. The final step in the biosynthesis of sterigmatocystin is the methylation of demethylsterigmatocystin catalyzed by the methyltransferase stcP. The sequence is that of Glutathione S-transferase stcT from Emericella nidulans (strain FGSC A4 / ATCC 38163 / CBS 112.46 / NRRL 194 / M139) (Aspergillus nidulans).